Here is a 525-residue protein sequence, read N- to C-terminus: GMP synthase [glutamine-hydrolyzing] (525 aa).

In terms of domain architecture, Glutamine amidotransferase type-1 spans 9 to 207; that stretch reads RILILDFGSQ…VRDICQCEAL (199 aa). Cys86 (nucleophile) is an active-site residue. Residues His181 and Glu183 contribute to the active site. The GMPS ATP-PPase domain maps to 208–400; sequence WTPAKIIDDA…LGLPYDMLYR (193 aa). Residue 235–241 coordinates ATP; that stretch reads SGGVDSS.

As to quaternary structure, homodimer.

It catalyses the reaction XMP + L-glutamine + ATP + H2O = GMP + L-glutamate + AMP + diphosphate + 2 H(+). The protein operates within purine metabolism; GMP biosynthesis; GMP from XMP (L-Gln route): step 1/1. Functionally, catalyzes the synthesis of GMP from XMP. This chain is GMP synthase [glutamine-hydrolyzing], found in Shigella dysenteriae serotype 1 (strain Sd197).